Reading from the N-terminus, the 497-residue chain is Glycerol kinase (497 aa).

T13 serves as a coordination point for ADP. Residues T13, T14, and S15 each contribute to the ATP site. Residue T13 participates in sn-glycerol 3-phosphate binding. R17 contacts ADP. Sn-glycerol 3-phosphate-binding residues include R83, E84, and Y135. Glycerol is bound by residues R83, E84, and Y135. Residue H231 is modified to Phosphohistidine; by HPr. Residue D245 coordinates sn-glycerol 3-phosphate. Glycerol contacts are provided by D245 and Q246. ADP-binding residues include T267 and G310. Residues T267, G310, Q314, and G411 each contribute to the ATP site. ADP contacts are provided by G411 and N415.

It belongs to the FGGY kinase family. As to quaternary structure, homotetramer and homodimer (in equilibrium). Post-translationally, the phosphoenolpyruvate-dependent sugar phosphotransferase system (PTS), including enzyme I, and histidine-containing protein (HPr) are required for the phosphorylation, which leads to the activation of the enzyme.

It catalyses the reaction glycerol + ATP = sn-glycerol 3-phosphate + ADP + H(+). It participates in polyol metabolism; glycerol degradation via glycerol kinase pathway; sn-glycerol 3-phosphate from glycerol: step 1/1. With respect to regulation, activated by phosphorylation and inhibited by fructose 1,6-bisphosphate (FBP). Functionally, key enzyme in the regulation of glycerol uptake and metabolism. Catalyzes the phosphorylation of glycerol to yield sn-glycerol 3-phosphate. The chain is Glycerol kinase from Listeria welshimeri serovar 6b (strain ATCC 35897 / DSM 20650 / CCUG 15529 / CIP 8149 / NCTC 11857 / SLCC 5334 / V8).